The following is a 300-amino-acid chain: MDLPPQLSFALYVSAFALGFPLNLLAIRGAVSHAKLRLTPSLVYTLHLGCSDLLLAITLPLKAVEALASGAWPLPLPFCPVFALAHFAPLYAGGGFLAALSAGRYLGAAFPFGYQAIRRPRYSWGVCVAIWALVLCHLGLALGLETSGSWLDNSTSSLGINIPVNGSPVCLEAWDPDSARPARLSFSILLFFLPLVITAFCYVGCLRALVRSGLSHKRKLRAAWVAGGALLTLLLCLGPYNASNVASFINPDLGGSWRKLGLITGAWSVVLNPLVTGYLGTGPGRGTICVTRTQRGTIQK.

Residues 1–8 lie on the Extracellular side of the membrane; it reads MDLPPQLS. The chain crosses the membrane as a helical span at residues 9 to 31; it reads FALYVSAFALGFPLNLLAIRGAV. Residues 32 to 41 lie on the Cytoplasmic side of the membrane; that stretch reads SHAKLRLTPS. Residues 42 to 64 traverse the membrane as a helical segment; the sequence is LVYTLHLGCSDLLLAITLPLKAV. Residues 65-79 lie on the Extracellular side of the membrane; sequence EALASGAWPLPLPFC. A disulfide bond links C79 and C170. A helical membrane pass occupies residues 80–101; the sequence is PVFALAHFAPLYAGGGFLAALS. At 102-121 the chain is on the cytoplasmic side; sequence AGRYLGAAFPFGYQAIRRPR. The chain crosses the membrane as a helical span at residues 122–142; sequence YSWGVCVAIWALVLCHLGLAL. At 143 to 178 the chain is on the extracellular side; it reads GLETSGSWLDNSTSSLGINIPVNGSPVCLEAWDPDS. N153 is a glycosylation site (N-linked (GlcNAc...) asparagine). The chain crosses the membrane as a helical span at residues 179-200; it reads ARPARLSFSILLFFLPLVITAF. Residues 201–223 are Cytoplasmic-facing; sequence CYVGCLRALVRSGLSHKRKLRAA. A helical transmembrane segment spans residues 224–248; that stretch reads WVAGGALLTLLLCLGPYNASNVASF. At 249–256 the chain is on the extracellular side; the sequence is INPDLGGS. A helical membrane pass occupies residues 257–279; sequence WRKLGLITGAWSVVLNPLVTGYL. Topologically, residues 280–300 are cytoplasmic; that stretch reads GTGPGRGTICVTRTQRGTIQK.

Belongs to the G-protein coupled receptor 1 family. In terms of tissue distribution, expressed in pancreatic islet beta cells (at protein level). Expressed in pancreatic islet beta cells.

It localises to the cell membrane. Is also activated by synthetic agonists, such as AM-8182, AM-6331 and TAK-875 (fasiglifam). AM-8182 is a full agonist, while AM-6331 and TAK-875 (fasiglifam) are partial agonists that potentiate the activity of the endogenous ligands, such as alpha-linolenic acid and gamma-linolenic acid. In terms of biological role, G-protein coupled receptor for medium and long chain saturated and unsaturated fatty acids that plays an important role in glucose homeostasis. Fatty acid binding increases glucose-stimulated insulin secretion, and may also enhance the secretion of glucagon-like peptide 1 (GLP-1). May also play a role in bone homeostasis; receptor signaling activates pathways that inhibit osteoclast differentiation. Ligand binding leads to a conformation change that triggers signaling via G-proteins that activate phospholipase C, leading to an increase of the intracellular calcium concentration. Seems to act through a G(q) and G(i)-mediated pathway. Mediates the anti-inflammatory effects of omega-3 polyunsaturated fatty acids (PUFAs) via inhibition of NLRP3 inflammasome activation. The sequence is that of Free fatty acid receptor 1 (Ffar1) from Mus musculus (Mouse).